An 85-amino-acid chain; its full sequence is MKLFLLLLISASMLIDGLVNADGYIRGSNGCKVSCLWGNEGCNKECGAYGASYGYCWTWGLACWCEGLPDDKTWKSESNTCGGKK.

Residues 1–21 form the signal peptide; that stretch reads MKLFLLLLISASMLIDGLVNA. Residues 22–82 form the LCN-type CS-alpha/beta domain; the sequence is DGYIRGSNGC…TWKSESNTCG (61 aa). 4 cysteine pairs are disulfide-bonded: C31/C81, C35/C56, C42/C63, and C46/C65. Position 82 is a glycine amide (G82).

Belongs to the long (4 C-C) scorpion toxin superfamily. Sodium channel inhibitor family. Beta subfamily. As to expression, expressed by the venom gland.

The protein localises to the secreted. In terms of biological role, depressant insect toxins cause a transient contraction paralysis followed by a slow flaccid paralysis. They bind voltage-independently to sodium channels (Nav) and block action potentials, primarily by depolarizing the axonal membrane and suppressing the sodium current. This is Depressant insect toxin BmK ITa1 from Olivierus martensii (Manchurian scorpion).